Reading from the N-terminus, the 140-residue chain is Endoribonuclease YbeY (140 aa).

Residues His100, His104, and His110 each coordinate Zn(2+).

The protein belongs to the endoribonuclease YbeY family. Requires Zn(2+) as cofactor.

Its subcellular location is the cytoplasm. Functionally, single strand-specific metallo-endoribonuclease involved in late-stage 70S ribosome quality control and in maturation of the 3' terminus of the 16S rRNA. The polypeptide is Endoribonuclease YbeY (Helicobacter pylori (strain ATCC 700392 / 26695) (Campylobacter pylori)).